Consider the following 300-residue polypeptide: GTPase Era (300 aa).

The 169-residue stretch at K4–E172 folds into the Era-type G domain. The segment at G12–S19 is G1. G12–S19 lines the GTP pocket. The tract at residues Q38–N42 is G2. A G3 region spans residues D59–G62. GTP is bound by residues D59–I63 and N121–D124. Residues N121 to D124 are G4. Residues I151–A153 form a G5 region. The 86-residue stretch at I195–E280 folds into the KH type-2 domain.

It belongs to the TRAFAC class TrmE-Era-EngA-EngB-Septin-like GTPase superfamily. Era GTPase family. As to quaternary structure, monomer.

Its subcellular location is the cytoplasm. The protein localises to the cell inner membrane. An essential GTPase that binds both GDP and GTP, with rapid nucleotide exchange. Plays a role in 16S rRNA processing and 30S ribosomal subunit biogenesis and possibly also in cell cycle regulation and energy metabolism. This is GTPase Era from Thermotoga petrophila (strain ATCC BAA-488 / DSM 13995 / JCM 10881 / RKU-1).